The following is a 373-amino-acid chain: Lipoyl synthase, mitochondrial (373 aa).

Residues 1–26 constitute a mitochondrion transit peptide; sequence MALRCWDAARSLGSRIFGRYACSVRA. [4Fe-4S] cluster-binding residues include Cys105, Cys110, Cys116, Cys136, Cys140, Cys143, and Ser351. The 220-residue stretch at 121-340 folds into the Radical SAM core domain; sequence EYATATATIM…EEVGNELGFH (220 aa).

The protein belongs to the radical SAM superfamily. Lipoyl synthase family. The cofactor is [4Fe-4S] cluster.

It localises to the mitochondrion. The catalysed reaction is [[Fe-S] cluster scaffold protein carrying a second [4Fe-4S](2+) cluster] + N(6)-octanoyl-L-lysyl-[protein] + 2 oxidized [2Fe-2S]-[ferredoxin] + 2 S-adenosyl-L-methionine + 4 H(+) = [[Fe-S] cluster scaffold protein] + N(6)-[(R)-dihydrolipoyl]-L-lysyl-[protein] + 4 Fe(3+) + 2 hydrogen sulfide + 2 5'-deoxyadenosine + 2 L-methionine + 2 reduced [2Fe-2S]-[ferredoxin]. The protein operates within protein modification; protein lipoylation via endogenous pathway; protein N(6)-(lipoyl)lysine from octanoyl-[acyl-carrier-protein]: step 2/2. In terms of biological role, catalyzes the radical-mediated insertion of two sulfur atoms into the C-6 and C-8 positions of the octanoyl moiety bound to the lipoyl domains of lipoate-dependent enzymes, thereby converting the octanoylated domains into lipoylated derivatives. This chain is Lipoyl synthase, mitochondrial (Lias), found in Rattus norvegicus (Rat).